The primary structure comprises 356 residues: Heat-inducible transcription repressor HrcA (356 aa).

This sequence belongs to the HrcA family.

Its function is as follows. Negative regulator of class I heat shock genes (grpE-dnaK-dnaJ and groELS operons). Prevents heat-shock induction of these operons. The polypeptide is Heat-inducible transcription repressor HrcA (Chlorobaculum parvum (strain DSM 263 / NCIMB 8327) (Chlorobium vibrioforme subsp. thiosulfatophilum)).